Consider the following 71-residue polypeptide: Large ribosomal subunit protein uL29 (71 aa).

It belongs to the universal ribosomal protein uL29 family.

The protein is Large ribosomal subunit protein uL29 of Rickettsia canadensis (strain McKiel).